Here is an 86-residue protein sequence, read N- to C-terminus: Anti-adapter protein IraP (86 aa).

Positions 1 to 36 (MKNLIAELLFKLAQKEEESKELCAQVEALEIIVTAM) form a coiled coil.

The protein belongs to the IraP family. In terms of assembly, interacts with RssB.

It localises to the cytoplasm. Functionally, inhibits RpoS proteolysis by regulating RssB activity, thereby increasing the stability of the sigma stress factor RpoS especially during phosphate starvation, but also in stationary phase and during nitrogen starvation. Its effect on RpoS stability is due to its interaction with RssB, which probably blocks the interaction of RssB with RpoS, and the consequent delivery of the RssB-RpoS complex to the ClpXP protein degradation pathway. The chain is Anti-adapter protein IraP from Escherichia coli (strain SE11).